Here is a 125-residue protein sequence, read N- to C-terminus: Cu-Zn superoxide dismutase-like protein OPG175 (125 aa).

The cysteines at positions 52 and 102 are disulfide-linked.

This sequence belongs to the Cu-Zn superoxide dismutase family.

It is found in the virion. The protein resides in the host cytoplasm. In terms of biological role, superoxide dismutase-like protein with no enzymatic activity. The chain is Cu-Zn superoxide dismutase-like protein OPG175 (OPG175) from Homo sapiens (Human).